We begin with the raw amino-acid sequence, 272 residues long: Thiazole synthase (272 aa).

The Schiff-base intermediate with DXP role is filled by Lys-111. 1-deoxy-D-xylulose 5-phosphate is bound by residues Gly-172, 198-199, and 220-221; these read AG and NS. The segment at 249 to 272 is disordered; sequence SGRLPRRDQASASSPTTGLVQSPQ. The segment covering 258-272 has biased composition (polar residues); the sequence is ASASSPTTGLVQSPQ.

It belongs to the ThiG family. In terms of assembly, homotetramer. Forms heterodimers with either ThiH or ThiS.

It localises to the cytoplasm. It catalyses the reaction [ThiS sulfur-carrier protein]-C-terminal-Gly-aminoethanethioate + 2-iminoacetate + 1-deoxy-D-xylulose 5-phosphate = [ThiS sulfur-carrier protein]-C-terminal Gly-Gly + 2-[(2R,5Z)-2-carboxy-4-methylthiazol-5(2H)-ylidene]ethyl phosphate + 2 H2O + H(+). Its pathway is cofactor biosynthesis; thiamine diphosphate biosynthesis. Its function is as follows. Catalyzes the rearrangement of 1-deoxy-D-xylulose 5-phosphate (DXP) to produce the thiazole phosphate moiety of thiamine. Sulfur is provided by the thiocarboxylate moiety of the carrier protein ThiS. In vitro, sulfur can be provided by H(2)S. The chain is Thiazole synthase from Synechococcus sp. (strain CC9605).